Reading from the N-terminus, the 228-residue chain is PKHD-type hydroxylase Vapar_1809 (228 aa).

A Fe2OG dioxygenase domain is found at 78–179 (QISPPLFNRY…RTASYFWIQS (102 aa)). Histidine 97, aspartate 99, and histidine 160 together coordinate Fe cation. Arginine 170 serves as a coordination point for 2-oxoglutarate.

Requires Fe(2+) as cofactor. It depends on L-ascorbate as a cofactor.

This Variovorax paradoxus (strain S110) protein is PKHD-type hydroxylase Vapar_1809.